Reading from the N-terminus, the 561-residue chain is Arginine--tRNA ligase (561 aa).

The 'HIGH' region signature appears at 129 to 139; it reads ANPTGPLHVGH.

This sequence belongs to the class-I aminoacyl-tRNA synthetase family. In terms of assembly, monomer.

Its subcellular location is the cytoplasm. It carries out the reaction tRNA(Arg) + L-arginine + ATP = L-arginyl-tRNA(Arg) + AMP + diphosphate. This is Arginine--tRNA ligase from Bordetella bronchiseptica (strain ATCC BAA-588 / NCTC 13252 / RB50) (Alcaligenes bronchisepticus).